We begin with the raw amino-acid sequence, 185 residues long: Elongation factor P (185 aa).

It belongs to the elongation factor P family.

The protein localises to the cytoplasm. It participates in protein biosynthesis; polypeptide chain elongation. Its function is as follows. Involved in peptide bond synthesis. Stimulates efficient translation and peptide-bond synthesis on native or reconstituted 70S ribosomes in vitro. Probably functions indirectly by altering the affinity of the ribosome for aminoacyl-tRNA, thus increasing their reactivity as acceptors for peptidyl transferase. The sequence is that of Elongation factor P from Clostridium botulinum (strain ATCC 19397 / Type A).